Consider the following 360-residue polypeptide: Phospho-N-acetylmuramoyl-pentapeptide-transferase (360 aa).

Over 1–25 (MLVWLAEHLVKYYSGFNVFSYLTFR) the chain is Periplasmic. Residues 26–46 (AIVSLLTALFISLWMGPRMIA) form a helical membrane-spanning segment. Over 47-71 (HLQKLSFGQVVRNDGPESHFSKRGT) the chain is Cytoplasmic. The chain crosses the membrane as a helical span at residues 72–92 (PTMGGIMILTAIVISVLLWAY). Position 93 (P93) is a topological domain, periplasmic. The chain crosses the membrane as a helical span at residues 94–114 (SNPYVWCVLVVLVGYGVIGFV). At 115–131 (DDYRKVVRKDTKGLIAR) the chain is on the cytoplasmic side. A helical transmembrane segment spans residues 132-152 (WKYFWMSVIALGVAFALYLAG). Residues 153 to 167 (KDTPATQLVVPFFKD) lie on the Periplasmic side of the membrane. Residues 168 to 188 (VMPQLGLFYILLAYFVIVGTG) form a helical membrane-spanning segment. At 189-198 (NAVNLTDGLD) the chain is on the cytoplasmic side. A helical membrane pass occupies residues 199–219 (GLAIMPTVFVAGGFALVAWAT). Over 220–235 (GNMNFASYLHIPYLRH) the chain is Periplasmic. The chain crosses the membrane as a helical span at residues 236–256 (AGELVIVCTAIVGAGLGFLWF). The Cytoplasmic portion of the chain corresponds to 257–262 (NTYPAQ). The helical transmembrane segment at 263-283 (VFMGDVGSLALGGALGIIAVL) threads the bilayer. Residues 284–287 (LRQE) lie on the Periplasmic side of the membrane. A helical transmembrane segment spans residues 288–308 (FLLVIMGGVFVVETLSVILQV). Topologically, residues 309–337 (GSFKLRGQRIFRMAPIHHHYELKGWPEPR) are cytoplasmic. The chain crosses the membrane as a helical span at residues 338 to 358 (VIVRFWIISLMLVLIGLATLK). Residues 359–360 (VR) lie on the Periplasmic side of the membrane.

The protein belongs to the glycosyltransferase 4 family. MraY subfamily. It depends on Mg(2+) as a cofactor.

Its subcellular location is the cell inner membrane. The enzyme catalyses UDP-N-acetyl-alpha-D-muramoyl-L-alanyl-gamma-D-glutamyl-meso-2,6-diaminopimeloyl-D-alanyl-D-alanine + di-trans,octa-cis-undecaprenyl phosphate = di-trans,octa-cis-undecaprenyl diphospho-N-acetyl-alpha-D-muramoyl-L-alanyl-D-glutamyl-meso-2,6-diaminopimeloyl-D-alanyl-D-alanine + UMP. It functions in the pathway cell wall biogenesis; peptidoglycan biosynthesis. Its function is as follows. Catalyzes the initial step of the lipid cycle reactions in the biosynthesis of the cell wall peptidoglycan: transfers peptidoglycan precursor phospho-MurNAc-pentapeptide from UDP-MurNAc-pentapeptide onto the lipid carrier undecaprenyl phosphate, yielding undecaprenyl-pyrophosphoryl-MurNAc-pentapeptide, known as lipid I. This Shigella boydii serotype 18 (strain CDC 3083-94 / BS512) protein is Phospho-N-acetylmuramoyl-pentapeptide-transferase.